We begin with the raw amino-acid sequence, 96 residues long: Elicitor peptide 3 (96 aa).

A propeptide spanning residues 1–73 is cleaved from the precursor; sequence MENLRNGEDN…EEEEEDGMTI (73 aa). The disordered stretch occupies residues 32–96; the sequence is SGLESSSSSS…PSSGKGGKHN (65 aa). Residues 35 to 49 are compositionally biased toward low complexity; the sequence is ESSSSSSSSCDLSSS. The segment covering 52-71 has biased composition (acidic residues); it reads EEDESIDIKEEEEEEEEDGM.

The protein belongs to the brassicaceae elicitor peptide family.

Functionally, elicitor of plant defense. In Arabidopsis thaliana (Mouse-ear cress), this protein is Elicitor peptide 3 (PEP3).